We begin with the raw amino-acid sequence, 433 residues long: Glycerol-3-phosphate dehydrogenase [NAD(+)] (433 aa).

Residues 17–22, Phe-49, and Phe-117 contribute to the NAD(+) site; that span reads GSGNWG. Residue Lys-140 participates in substrate binding. Ala-173 contacts NAD(+). The disordered stretch occupies residues 187-246; it reads IAYDPPPIDSSRAATPRDRSPNYDSTSANKLPDLTVTSADSNGKDDRGRRTKAKLTPVPE. Positions 208 to 227 are enriched in polar residues; that stretch reads NYDSTSANKLPDLTVTSADS. Residue Lys-283 is the Proton acceptor of the active site. NAD(+) contacts are provided by Arg-349 and Gln-378. A substrate-binding site is contributed by 349-350; sequence RN.

It belongs to the NAD-dependent glycerol-3-phosphate dehydrogenase family.

The enzyme catalyses sn-glycerol 3-phosphate + NAD(+) = dihydroxyacetone phosphate + NADH + H(+). The protein is Glycerol-3-phosphate dehydrogenase [NAD(+)] of Pyricularia oryzae (strain Y34) (Rice blast fungus).